Reading from the N-terminus, the 142-residue chain is Large ribosomal subunit protein uL11 (142 aa).

It belongs to the universal ribosomal protein uL11 family. As to quaternary structure, part of the ribosomal stalk of the 50S ribosomal subunit. Interacts with L10 and the large rRNA to form the base of the stalk. L10 forms an elongated spine to which L12 dimers bind in a sequential fashion forming a multimeric L10(L12)X complex. One or more lysine residues are methylated.

Its function is as follows. Forms part of the ribosomal stalk which helps the ribosome interact with GTP-bound translation factors. The sequence is that of Large ribosomal subunit protein uL11 from Aeromonas hydrophila subsp. hydrophila (strain ATCC 7966 / DSM 30187 / BCRC 13018 / CCUG 14551 / JCM 1027 / KCTC 2358 / NCIMB 9240 / NCTC 8049).